Consider the following 2212-residue polypeptide: Nonribosomal peptide synthetase ftmPS (2212 aa).

The tract at residues 74-473 (TYAELDSLSD…IEHHLQQTLP (400 aa)) is adenylation 1. The 78-residue stretch at 592-669 (PPSTLKETTI…EQSQRAGLIQ (78 aa)) folds into the Carrier 1 domain. Ser629 carries the O-(pantetheine 4'-phosphoryl)serine modification. Residues 708–973 (EDIYPCTALQ…IATVPLRIRV (266 aa)) are condensation 1. Residues 1167–1564 (TYRELWAHSS…LSAVEASLMR (398 aa)) are adenylation 2. Positions 1678–1757 (PMSDDNERRL…QFRHLITEDD (80 aa)) constitute a Carrier 2 domain. The residue at position 1715 (Ser1715) is an O-(pantetheine 4'-phosphoryl)serine. The condensation 2 stretch occupies residues 1815 to 2070 (HFQFDLSGAI…CTNYIPYRLS (256 aa)).

This sequence belongs to the NRP synthetase family.

It catalyses the reaction L-proline + L-tryptophan + 2 ATP = brevianamide F + 2 AMP + 2 diphosphate + 2 H(+). Its pathway is mycotoxin biosynthesis. In terms of biological role, nonribosomal peptide synthetase; part of the gene cluster that mediates the biosynthesis of fumitremorgins, indole alkaloids that carry not only intriguing chemical structures, but also interesting biological and pharmacological activities. The biosynthesis of fumitremorgin-type alkaloids begins by condensation of the two amino acids L-tryptophan and L-proline to brevianamide F, catalyzed by the non-ribosomal peptide synthetase ftmPS/ftmA. Brevianamide F is then prenylated by the prenyltransferase ftmPT1/ftmB in the presence of dimethylallyl diphosphate, resulting in the formation of tryprostatin B. The three cytochrome P450 monooxygenases, ftmP450-1/ftmC, ftmP450-2/ftmE and ftmP450-3/FtmG, are responsible for the conversion of tryprostatin B to 6-hydroxytryprostatin B, tryprostatin A to fumitremorgin C and fumitremorgin C to 12,13-dihydroxyfumitremorgin C, respectively. The putative methyltransferase ftmMT/ftmD is expected for the conversion of 6-hydroxytryprostatin B to tryprostatin A. FtmPT2/FtmH catalyzes the prenylation of 12,13-dihydroxyfumitre-morgin C in the presence of dimethylallyl diphosphate, resulting in the formation of fumitremorgin B. Fumitremorgin B is further converted to verruculogen by ftmOx1/ftmF via the insertion of an endoperoxide bond between the two prenyl moieties. Finally, verruculogen is further converted to fumitremorgin A by the verruculogen prenyltransferase ftmPT3. The polypeptide is Nonribosomal peptide synthetase ftmPS (ftmPS) (Neosartorya fischeri (strain ATCC 1020 / DSM 3700 / CBS 544.65 / FGSC A1164 / JCM 1740 / NRRL 181 / WB 181) (Aspergillus fischerianus)).